We begin with the raw amino-acid sequence, 336 residues long: Dihydroorotate dehydrogenase (quinone) (336 aa).

Residues Ala62–Lys66 and Thr86 contribute to the FMN site. A substrate-binding site is contributed by Lys66. Asn111–Phe115 provides a ligand contact to substrate. Residues Asn139 and Asn172 each coordinate FMN. Asn172 provides a ligand contact to substrate. Ser175 functions as the Nucleophile in the catalytic mechanism. Asn177 contacts substrate. FMN-binding residues include Lys217 and Thr245. Asn246–Thr247 is a substrate binding site. Residues Gly268, Gly297, and Tyr318–Thr319 each bind FMN.

Belongs to the dihydroorotate dehydrogenase family. Type 2 subfamily. Monomer. FMN is required as a cofactor.

It localises to the cell membrane. The enzyme catalyses (S)-dihydroorotate + a quinone = orotate + a quinol. The protein operates within pyrimidine metabolism; UMP biosynthesis via de novo pathway; orotate from (S)-dihydroorotate (quinone route): step 1/1. Catalyzes the conversion of dihydroorotate to orotate with quinone as electron acceptor. The polypeptide is Dihydroorotate dehydrogenase (quinone) (Pseudoalteromonas translucida (strain TAC 125)).